A 76-amino-acid chain; its full sequence is Small ribosomal subunit protein bS18 (76 aa).

Belongs to the bacterial ribosomal protein bS18 family. Part of the 30S ribosomal subunit. Forms a tight heterodimer with protein bS6.

Binds as a heterodimer with protein bS6 to the central domain of the 16S rRNA, where it helps stabilize the platform of the 30S subunit. This is Small ribosomal subunit protein bS18 from Nitrosomonas eutropha (strain DSM 101675 / C91 / Nm57).